Consider the following 377-residue polypeptide: GTP 3',8-cyclase (377 aa).

The interval 1–29 (MTTRLYLSPTPPRNDREGASKSTSASIKH) is disordered. The 227-residue stretch at 45 to 271 (RFGRIARDLR…FTLSPAKEPR (227 aa)) folds into the Radical SAM core domain. R54 provides a ligand contact to GTP. Residues C61 and C65 each coordinate [4Fe-4S] cluster. Y67 serves as a coordination point for S-adenosyl-L-methionine. Residue C68 participates in [4Fe-4S] cluster binding. R105 provides a ligand contact to GTP. S-adenosyl-L-methionine is bound at residue G109. T140 provides a ligand contact to GTP. An S-adenosyl-L-methionine-binding site is contributed by S164. K201 contacts GTP. An S-adenosyl-L-methionine-binding site is contributed by M235. Residues C304 and C307 each contribute to the [4Fe-4S] cluster site. 309–311 (RSR) contacts GTP. C321 provides a ligand contact to [4Fe-4S] cluster.

The protein belongs to the radical SAM superfamily. MoaA family. In terms of assembly, monomer and homodimer. [4Fe-4S] cluster is required as a cofactor.

It carries out the reaction GTP + AH2 + S-adenosyl-L-methionine = (8S)-3',8-cyclo-7,8-dihydroguanosine 5'-triphosphate + 5'-deoxyadenosine + L-methionine + A + H(+). It functions in the pathway cofactor biosynthesis; molybdopterin biosynthesis. In terms of biological role, catalyzes the cyclization of GTP to (8S)-3',8-cyclo-7,8-dihydroguanosine 5'-triphosphate. The polypeptide is GTP 3',8-cyclase (Corynebacterium glutamicum (strain ATCC 13032 / DSM 20300 / JCM 1318 / BCRC 11384 / CCUG 27702 / LMG 3730 / NBRC 12168 / NCIMB 10025 / NRRL B-2784 / 534)).